The chain runs to 249 residues: Molybdate/tungstate transport system permease protein WtpB (249 aa).

The Cytoplasmic portion of the chain corresponds to 1–5 (MEKFD). The helical transmembrane segment at 6–26 (IAMTVFLVMIFLFIFLPIIYM) threads the bilayer. The Extracellular segment spans residues 27–48 (LSNPGDLNQLLDKEVIEAFKTT). In terms of domain architecture, ABC transmembrane type-1 spans 45 to 240 (FKTTLLAGAV…LISIALFALL (196 aa)). A helical membrane pass occupies residues 49–69 (LLAGAVATLIALIFGIPTGYI). The Cytoplasmic segment spans residues 70–93 (LARYDFKFKSFVEAVLDLPMAIPH). The helical transmembrane segment at 94–114 (SVIGIIILSFIYGIDIINFIG) threads the bilayer. Over 115–116 (RY) the chain is Extracellular. The chain crosses the membrane as a helical span at residues 117-137 (VVDNFWGIVTVYLFVGIPFMV). The Cytoplasmic segment spans residues 138–177 (NSIRDGFLSVDEEIEYVSRTLGASKIRTFFEISLPLIKNN). The chain crosses the membrane as a helical span at residues 178–198 (IISGIILSFARGISEVGAILI). Residues 199–223 (IAYYPKTVPILIYERFMSFGLDASK) lie on the Extracellular side of the membrane. A helical transmembrane segment spans residues 224–244 (PISVGMILISIALFALLRMFG). At 245–249 (RMRGR) the chain is on the cytoplasmic side.

This sequence belongs to the binding-protein-dependent transport system permease family. The complex is composed of two ATP-binding proteins (WtpC), two transmembrane proteins (WtpB) and a solute-binding protein (WtpA).

The protein localises to the cell membrane. Functionally, part of the ABC transporter complex WtpABC involved in molybdate/tungstate import. Probably responsible for the translocation of the substrate across the membrane. The chain is Molybdate/tungstate transport system permease protein WtpB (wtpB) from Methanocaldococcus jannaschii (strain ATCC 43067 / DSM 2661 / JAL-1 / JCM 10045 / NBRC 100440) (Methanococcus jannaschii).